A 207-amino-acid chain; its full sequence is Probable RNA 2'-phosphotransferase (207 aa).

It belongs to the KptA/TPT1 family.

In terms of biological role, removes the 2'-phosphate from RNA via an intermediate in which the phosphate is ADP-ribosylated by NAD followed by a presumed transesterification to release the RNA and generate ADP-ribose 1''-2''-cyclic phosphate (APPR&gt;P). May function as an ADP-ribosylase. This is Probable RNA 2'-phosphotransferase from Methanosarcina barkeri (strain Fusaro / DSM 804).